Reading from the N-terminus, the 408-residue chain is Dual-specificity RNA methyltransferase RlmN (408 aa).

E120 functions as the Proton acceptor in the catalytic mechanism. One can recognise a Radical SAM core domain in the interval 126-375 (EEGRGTLCIS…IRTPRGRDIL (250 aa)). A disulfide bridge links C133 with C378. Residues C140, C144, and C147 each contribute to the [4Fe-4S] cluster site. S-adenosyl-L-methionine is bound by residues 204–205 (GE), S236, 258–260 (SLH), and N335. C378 acts as the S-methylcysteine intermediate in catalysis.

This sequence belongs to the radical SAM superfamily. RlmN family. It depends on [4Fe-4S] cluster as a cofactor.

The protein resides in the cytoplasm. It carries out the reaction adenosine(2503) in 23S rRNA + 2 reduced [2Fe-2S]-[ferredoxin] + 2 S-adenosyl-L-methionine = 2-methyladenosine(2503) in 23S rRNA + 5'-deoxyadenosine + L-methionine + 2 oxidized [2Fe-2S]-[ferredoxin] + S-adenosyl-L-homocysteine. The enzyme catalyses adenosine(37) in tRNA + 2 reduced [2Fe-2S]-[ferredoxin] + 2 S-adenosyl-L-methionine = 2-methyladenosine(37) in tRNA + 5'-deoxyadenosine + L-methionine + 2 oxidized [2Fe-2S]-[ferredoxin] + S-adenosyl-L-homocysteine. Functionally, specifically methylates position 2 of adenine 2503 in 23S rRNA and position 2 of adenine 37 in tRNAs. m2A2503 modification seems to play a crucial role in the proofreading step occurring at the peptidyl transferase center and thus would serve to optimize ribosomal fidelity. This chain is Dual-specificity RNA methyltransferase RlmN, found in Rhizobium leguminosarum bv. trifolii (strain WSM2304).